The chain runs to 614 residues: Vitamin B12 transporter BtuB (614 aa).

The N-terminal stretch at Met-1–Ala-20 is a signal peptide. Residues Asp-26–Asn-33 carry the TonB box motif. Residues Pro-38–Thr-152 form the TBDR plug domain. Cyanocob(III)alamin contacts are provided by residues Leu-83, Ser-85, Asn-92, and Val-110–Ser-111. Residues Glu-155 to Phe-614 form the TBDR beta-barrel domain. 3 consecutive transmembrane segments (beta stranded) span residues Thr-158–Gly-165, Tyr-169–Gln-178, and Thr-184–Thr-195. Residues Asp-199, Gln-211, Asp-213, and Asp-215 each coordinate Ca(2+). The next 2 beta stranded transmembrane spans lie at Phe-217–Glu-227 and Asp-232–Asn-248. Residues Tyr-249 and Asp-250 each contribute to the Ca(2+) site. Ala-251 contacts cyanocob(III)alamin. Asp-261 lines the Ca(2+) pocket. Transmembrane regions (beta stranded) follow at residues Arg-263–Asn-277, Glu-279–Asn-296, Thr-309–Ile-325, His-328–Trp-337, Tyr-353–Gly-369, Phe-371–Asp-381, Phe-385–Ile-400, Tyr-403–Asn-417, Lys-434–Glu-443, Val-449–Asn-458, Tyr-473–Phe-490, Pro-494–Ala-509, Arg-517–Trp-529, and Asp-535–Asp-550. Thr-309 is a cyanocob(III)alamin binding site. Arg-517 serves as a coordination point for cyanocob(III)alamin. Tyr-551 is a cyanocob(III)alamin binding site. 3 beta stranded membrane-spanning segments follow: residues Thr-558–Ala-572, Ile-585–Val-596, and Ala-602–Phe-614. Residues Tyr-597–Phe-614 carry the TonB C-terminal box motif.

It belongs to the TonB-dependent receptor family. BtuB (TC 1.B.14.3.1) subfamily.

It is found in the cell outer membrane. In terms of biological role, involved in the active translocation of vitamin B12 (cyanocobalamin) across the outer membrane to the periplasmic space. It derives its energy for transport by interacting with the trans-periplasmic membrane protein TonB. The protein is Vitamin B12 transporter BtuB of Shigella dysenteriae serotype 1 (strain Sd197).